The chain runs to 75 residues: Small ribosomal subunit protein bS18c (75 aa).

It belongs to the bacterial ribosomal protein bS18 family. In terms of assembly, part of the 30S ribosomal subunit.

It localises to the plastid. The protein localises to the chloroplast. The polypeptide is Small ribosomal subunit protein bS18c (Angiopteris evecta (Mule's foot fern)).